We begin with the raw amino-acid sequence, 601 residues long: Elongation factor 4 (601 aa).

The 183-residue stretch at 7–189 folds into the tr-type G domain; the sequence is DTIRNFSIVA…AIVAKLPPPK (183 aa). Residues 19–24 and 136–139 each bind GTP; these read DHGKST and NKID.

This sequence belongs to the TRAFAC class translation factor GTPase superfamily. Classic translation factor GTPase family. LepA subfamily.

It is found in the cell inner membrane. The catalysed reaction is GTP + H2O = GDP + phosphate + H(+). Functionally, required for accurate and efficient protein synthesis under certain stress conditions. May act as a fidelity factor of the translation reaction, by catalyzing a one-codon backward translocation of tRNAs on improperly translocated ribosomes. Back-translocation proceeds from a post-translocation (POST) complex to a pre-translocation (PRE) complex, thus giving elongation factor G a second chance to translocate the tRNAs correctly. Binds to ribosomes in a GTP-dependent manner. This chain is Elongation factor 4, found in Methylobacterium sp. (strain 4-46).